Here is a 233-residue protein sequence, read N- to C-terminus: Large ribosomal subunit protein uL1 (233 aa).

It belongs to the universal ribosomal protein uL1 family. Part of the 50S ribosomal subunit.

Its function is as follows. Binds directly to 23S rRNA. The L1 stalk is quite mobile in the ribosome, and is involved in E site tRNA release. In terms of biological role, protein L1 is also a translational repressor protein, it controls the translation of the L11 operon by binding to its mRNA. This Shewanella frigidimarina (strain NCIMB 400) protein is Large ribosomal subunit protein uL1.